The sequence spans 503 residues: Cytochrome P450 7A1 (503 aa).

Residues 4–24 (ISLIWGIAVLVSCCIWFIVGI) traverse the membrane as a helical segment. C444 contributes to the heme binding site.

It belongs to the cytochrome P450 family. Heme serves as cofactor. As to expression, detected in liver (at protein level). Liver.

The protein resides in the endoplasmic reticulum membrane. The protein localises to the microsome membrane. The catalysed reaction is cholesterol + reduced [NADPH--hemoprotein reductase] + O2 = 7alpha-hydroxycholesterol + oxidized [NADPH--hemoprotein reductase] + H2O + H(+). It catalyses the reaction 4beta-hydroxycholesterol + reduced [NADPH--hemoprotein reductase] + O2 = 4beta,7alpha-dihydroxycholesterol + oxidized [NADPH--hemoprotein reductase] + H2O + H(+). It carries out the reaction lathosterol + reduced [NADPH--hemoprotein reductase] + O2 = 7alpha,8alpha-epoxy-5alpha-cholestan-3beta-ol + oxidized [NADPH--hemoprotein reductase] + H2O + H(+). The enzyme catalyses lathosterol + reduced [NADPH--hemoprotein reductase] + O2 = 5alpha-cholestan-7-oxo-3beta-ol + oxidized [NADPH--hemoprotein reductase] + H2O + H(+). The catalysed reaction is 7-dehydrocholesterol + reduced [NADPH--hemoprotein reductase] + O2 = 7-oxocholesterol + oxidized [NADPH--hemoprotein reductase] + H2O + H(+). It catalyses the reaction (24S)-hydroxycholesterol + reduced [NADPH--hemoprotein reductase] + O2 = (24S)-7alpha-dihydroxycholesterol + oxidized [NADPH--hemoprotein reductase] + H2O + H(+). It carries out the reaction (24R)-hydroxycholesterol + reduced [NADPH--hemoprotein reductase] + O2 = (24R)-7alpha-dihydroxycholesterol + oxidized [NADPH--hemoprotein reductase] + H2O + H(+). It participates in lipid metabolism; bile acid biosynthesis. The protein operates within steroid metabolism; cholesterol degradation. A cytochrome P450 monooxygenase involved in the metabolism of endogenous cholesterol and its oxygenated derivatives (oxysterols). Mechanistically, uses molecular oxygen inserting one oxygen atom into a substrate, and reducing the second into a water molecule, with two electrons provided by NADPH via cytochrome P450 reductase (CPR; NADPH-ferrihemoprotein reductase). Functions as a critical regulatory enzyme of bile acid biosynthesis and cholesterol homeostasis. Catalyzes the hydroxylation of carbon hydrogen bond at 7-alpha position of cholesterol, a rate-limiting step in cholesterol catabolism and bile acid biosynthesis. 7-alpha hydroxylates several oxysterols, including 4beta-hydroxycholesterol and 24-hydroxycholesterol. Catalyzes the oxidation of the 7,8 double bond of 7-dehydrocholesterol and lathosterol with direct and predominant formation of the 7-keto derivatives. The sequence is that of Cytochrome P450 7A1 (Cyp7a1) from Rattus norvegicus (Rat).